The following is a 170-amino-acid chain: Fibroblast growth factor 2 (170 aa).

Residues 1-21 form a disordered region; sequence VGGRGRGRGTAAAARREPGGA. Residues R4, R6, and R8 each carry the omega-N-methylarginine; alternate modification. R4, R6, and R8 each carry symmetric dimethylarginine; alternate. The span at 9 to 21 shows a compositional bias: low complexity; sequence GTAAAARREPGGA. N51 lines the heparin pocket. Y97 carries the phosphotyrosine; by TEC modification. K110 is covalently cross-linked (Glycyl lysine isopeptide (Lys-Gly) (interchain with G-Cter in SUMO1)). The interval 143–159 is heparin-binding; the sequence is KRTGQYKLGSKTGPGQK.

It belongs to the heparin-binding growth factors family. In terms of assembly, monomer. Homodimer. Interacts with FGFR1, FGFR2, FGFR3 and FGFR4. Affinity between fibroblast growth factors (FGFs) and their receptors is increased by heparan sulfate glycosaminoglycans that function as coreceptors. Interacts with CSPG4, FGFBP1 and TEC. Found in a complex with FGFBP1, FGF1 and FGF2. Interacts with FGFBP3. Interacts with integrin ITGAV:ITGB3; the interaction is required for FGF2 signaling. Interacts with SNORC (via the extracellular domain). Interacts with glypican GPC3. In terms of processing, the N-terminus of isoform 2 is blocked. Phosphorylation at Tyr-97 regulates FGF2 unconventional secretion.

The protein localises to the secreted. The protein resides in the nucleus. Its function is as follows. Acts as a ligand for FGFR1, FGFR2, FGFR3 and FGFR4. Also acts as an integrin ligand which is required for FGF2 signaling. Binds to integrin ITGAV:ITGB3. Plays an important role in the regulation of cell survival, cell division, cell differentiation and cell migration. Functions as a potent mitogen in vitro. Can induce angiogenesis. Mediates phosphorylation of ERK1/2 and thereby promotes retinal lens fiber differentiation. The protein is Fibroblast growth factor 2 (FGF2) of Cavia porcellus (Guinea pig).